The primary structure comprises 631 residues: Phosphomethylpyrimidine synthase (631 aa).

Residues Asn239, Met268, Tyr297, His333, 353-355, 394-397, and Glu433 each bind substrate; these read SRG and DGLR. Residue His437 coordinates Zn(2+). Tyr460 contributes to the substrate binding site. Residue His501 participates in Zn(2+) binding. The [4Fe-4S] cluster site is built by Cys581, Cys584, and Cys589.

Belongs to the ThiC family. Homodimer. [4Fe-4S] cluster serves as cofactor.

The enzyme catalyses 5-amino-1-(5-phospho-beta-D-ribosyl)imidazole + S-adenosyl-L-methionine = 4-amino-2-methyl-5-(phosphooxymethyl)pyrimidine + CO + 5'-deoxyadenosine + formate + L-methionine + 3 H(+). It functions in the pathway cofactor biosynthesis; thiamine diphosphate biosynthesis. Its function is as follows. Catalyzes the synthesis of the hydroxymethylpyrimidine phosphate (HMP-P) moiety of thiamine from aminoimidazole ribotide (AIR) in a radical S-adenosyl-L-methionine (SAM)-dependent reaction. The chain is Phosphomethylpyrimidine synthase from Salmonella gallinarum (strain 287/91 / NCTC 13346).